The chain runs to 729 residues: Fatty acid oxidation complex subunit alpha (729 aa).

The segment at 1-189 is enoyl-CoA hydratase/isomerase; it reads MLYQSETLQL…KVGLVDAVVA (189 aa). Position 296 (D296) interacts with substrate. Residues 311 to 729 form a 3-hydroxyacyl-CoA dehydrogenase region; it reads SAPKQAAVLG…LLDVSISQPA (419 aa). Residues M324, D343, 400–402, K407, and S429 contribute to the NAD(+) site; that span reads VVE. H450 serves as the catalytic For 3-hydroxyacyl-CoA dehydrogenase activity. N453 is a binding site for NAD(+). N500 and Y660 together coordinate substrate.

This sequence in the N-terminal section; belongs to the enoyl-CoA hydratase/isomerase family. The protein in the C-terminal section; belongs to the 3-hydroxyacyl-CoA dehydrogenase family. As to quaternary structure, heterotetramer of two alpha chains (FadB) and two beta chains (FadA).

It carries out the reaction a (3S)-3-hydroxyacyl-CoA + NAD(+) = a 3-oxoacyl-CoA + NADH + H(+). The enzyme catalyses a (3S)-3-hydroxyacyl-CoA = a (2E)-enoyl-CoA + H2O. It catalyses the reaction a 4-saturated-(3S)-3-hydroxyacyl-CoA = a (3E)-enoyl-CoA + H2O. The catalysed reaction is (3S)-3-hydroxybutanoyl-CoA = (3R)-3-hydroxybutanoyl-CoA. It carries out the reaction a (3Z)-enoyl-CoA = a 4-saturated (2E)-enoyl-CoA. The enzyme catalyses a (3E)-enoyl-CoA = a 4-saturated (2E)-enoyl-CoA. It functions in the pathway lipid metabolism; fatty acid beta-oxidation. Its function is as follows. Involved in the aerobic and anaerobic degradation of long-chain fatty acids via beta-oxidation cycle. Catalyzes the formation of 3-oxoacyl-CoA from enoyl-CoA via L-3-hydroxyacyl-CoA. It can also use D-3-hydroxyacyl-CoA and cis-3-enoyl-CoA as substrate. In Yersinia enterocolitica serotype O:8 / biotype 1B (strain NCTC 13174 / 8081), this protein is Fatty acid oxidation complex subunit alpha.